The following is a 574-amino-acid chain: Glycine--tRNA ligase (574 aa).

The substrate site is built by Arg-96 and Glu-162. ATP is bound by residues 194–196 (RNE), 204–209 (IRLREF), 327–328 (EC), and 450–453 (GIDR). Substrate is bound at residue 209–213 (FTQAE). 446–450 (EPSYG) provides a ligand contact to substrate.

It belongs to the class-II aminoacyl-tRNA synthetase family.

The protein resides in the cytoplasm. It carries out the reaction tRNA(Gly) + glycine + ATP = glycyl-tRNA(Gly) + AMP + diphosphate. Catalyzes the attachment of glycine to tRNA(Gly). The protein is Glycine--tRNA ligase of Methanococcus maripaludis (strain C7 / ATCC BAA-1331).